The sequence spans 132 residues: Acid shock protein (132 aa).

The signal sequence occupies residues 1–21; that stretch reads MKKVLALIVAATMGLSSVAFA. Positions 22–69 are excised as a propeptide; sequence AETTAAATAAPAATSTTAAPAVEKAAPAKATHHKKHKATKQTTEQKAQ. Positions 30 to 50 are enriched in low complexity; sequence AAPAATSTTAAPAVEKAAPAK. The disordered stretch occupies residues 30 to 132; it reads AAPAATSTTA…AKKSATAPAA (103 aa). Residues 51–60 are compositionally biased toward basic residues; it reads ATHHKKHKAT. Residues 61–99 show a composition bias toward low complexity; it reads KQTTEQKAQAAKKAVKKAPAQKAQAAKKAVKKAPVQKAQ. Residues 100–124 show a composition bias toward basic residues; sequence AAKKHVKKAPAQKAQAAKKHHKTAK.

It belongs to the Asr family. In terms of processing, proteolytic processing gives rise to the active protein.

It localises to the periplasm. Functionally, required for growth and/or survival at acidic conditions. The polypeptide is Acid shock protein (Yersinia enterocolitica serotype O:8 / biotype 1B (strain NCTC 13174 / 8081)).